A 367-amino-acid chain; its full sequence is MNPDVAADLKELSTTLEGIESVMDLDALRAKIAELEEEAARPDLWDDVEHAQRVSSQLVHRQSELRKIKDLRQRVEDLEVLYELSEDEGDDSGLAEADSERTKLKKDLEALEVRTLLSGDYDQREAVVTIRAEAGGVDAADFAEMLMRMYVRWAERHEYPVEVYDTSYAEEAGLKSATFRVNAPYAYGTLSVEQGTHRLVRISPFDNQGRRQTSFAGVEVLPVVEETDHVEIPEKDIRVDVFRSSGPGGQSVNTTDSAVRITHIPTGIVVSCQNEKSQLQNKAAALRVLQSKLLAKKKEQERAELDALKDSGSSWGNQMRSYVLHPYQMVKDLRTEFEVGNPDAVLDGQIDGFLEAGIRWRRQQDAA.

Glutamine 250 is modified (N5-methylglutamine).

The protein belongs to the prokaryotic/mitochondrial release factor family. Methylated by PrmC. Methylation increases the termination efficiency of RF2.

It is found in the cytoplasm. Functionally, peptide chain release factor 2 directs the termination of translation in response to the peptide chain termination codons UGA and UAA. The protein is Peptide chain release factor 2 of Saccharopolyspora erythraea (strain ATCC 11635 / DSM 40517 / JCM 4748 / NBRC 13426 / NCIMB 8594 / NRRL 2338).